The sequence spans 154 residues: Aspartate carbamoyltransferase regulatory chain (154 aa).

Positions 109, 114, 138, and 141 each coordinate Zn(2+).

This sequence belongs to the PyrI family. Contains catalytic and regulatory chains. Requires Zn(2+) as cofactor.

Functionally, involved in allosteric regulation of aspartate carbamoyltransferase. This Aeromonas salmonicida (strain A449) protein is Aspartate carbamoyltransferase regulatory chain.